The primary structure comprises 203 residues: Xrcc4-like factor 1 (203 aa).

The protein belongs to the XRCC4-XLF family. XLF subfamily.

The protein localises to the nucleus. In terms of biological role, involved in double-strand break repair via non-homologous end joining (NHEJ); the repair of a double-strand break in DNA in which the two broken ends are rejoined with little or no sequence complementarity. Has a role in meiosis. The sequence is that of Xrcc4-like factor 1 (xlf1) from Schizosaccharomyces pombe (strain 972 / ATCC 24843) (Fission yeast).